The sequence spans 112 residues: Nucleoid-associated protein lpp2803 (112 aa).

Belongs to the YbaB/EbfC family. As to quaternary structure, homodimer.

Its subcellular location is the cytoplasm. It localises to the nucleoid. Its function is as follows. Binds to DNA and alters its conformation. May be involved in regulation of gene expression, nucleoid organization and DNA protection. The polypeptide is Nucleoid-associated protein lpp2803 (Legionella pneumophila (strain Paris)).